Here is a 142-residue protein sequence, read N- to C-terminus: Large ribosomal subunit protein uL13 (142 aa).

The protein belongs to the universal ribosomal protein uL13 family. In terms of assembly, part of the 50S ribosomal subunit.

In terms of biological role, this protein is one of the early assembly proteins of the 50S ribosomal subunit, although it is not seen to bind rRNA by itself. It is important during the early stages of 50S assembly. This chain is Large ribosomal subunit protein uL13, found in Psychrobacter arcticus (strain DSM 17307 / VKM B-2377 / 273-4).